Here is a 249-residue protein sequence, read N- to C-terminus: 5'-nucleotidase SurE (249 aa).

A divalent metal cation contacts are provided by Asp8, Asp9, Ser39, and Asn91.

The protein belongs to the SurE nucleotidase family. A divalent metal cation serves as cofactor.

It is found in the cytoplasm. It catalyses the reaction a ribonucleoside 5'-phosphate + H2O = a ribonucleoside + phosphate. Its function is as follows. Nucleotidase that shows phosphatase activity on nucleoside 5'-monophosphates. The polypeptide is 5'-nucleotidase SurE (Haemophilus influenzae (strain PittGG)).